The sequence spans 128 residues: Prokineticin-2 (128 aa).

The signal sequence occupies residues 1–27 (MRSSRCARLLLLLLLPPLLLTPPAGDA). 5 disulfides stabilise this stretch: cysteine 34–cysteine 46, cysteine 40–cysteine 58, cysteine 45–cysteine 106, cysteine 68–cysteine 114, and cysteine 108–cysteine 124. The segment at 71 to 95 (MTRKNHFGNGRQERRKRKRRRKKKV) is disordered. The span at 83 to 95 (ERRKRKRRRKKKV) shows a compositional bias: basic residues.

This sequence belongs to the AVIT (prokineticin) family.

Its subcellular location is the secreted. Functionally, may function as an output molecule from the suprachiasmatic nucleus (SCN) that transmits behavioral circadian rhythm. May also function locally within the SCN to synchronize output. Potently contracts gastrointestinal (GI) smooth muscle. This chain is Prokineticin-2 (PROK2), found in Bos taurus (Bovine).